A 100-amino-acid polypeptide reads, in one-letter code: Small ribosomal subunit protein uS14c (100 aa).

Residues Lys28–Gly45 show a composition bias toward basic and acidic residues. The disordered stretch occupies residues Lys28–Leu59.

Belongs to the universal ribosomal protein uS14 family. In terms of assembly, part of the 30S ribosomal subunit.

The protein localises to the plastid. It is found in the chloroplast. Binds 16S rRNA, required for the assembly of 30S particles. The chain is Small ribosomal subunit protein uS14c from Nandina domestica (Heavenly bamboo).